The sequence spans 273 residues: Protein E6 (273 aa).

2 zinc fingers span residues 27–63 (CIFC…CRDC) and 100–140 (CTVC…CSSC).

Belongs to the papillomaviridae E6 protein family. Forms homodimers. Interacts with ubiquitin-protein ligase UBE3A/E6-AP; this interaction stimulates UBE3A ubiquitin activity. Interacts with host BAK1.

Its subcellular location is the host cytoplasm. The protein localises to the host nucleus. Plays a major role in the induction and maintenance of cellular transformation. E6 associates with host UBE3A/E6-AP ubiquitin-protein ligase and modulates its activity. Protects host keratinocytes from apoptosis by mediating the degradation of host BAK1. May also inhibit host immune response. In Sylvilagus floridanus (Cottontail rabbit), this protein is Protein E6.